The chain runs to 627 residues: Neutral endopeptidase (627 aa).

The region spanning 1-627 (MTRIQDDLFA…RAPENRLKIW (627 aa)) is the Peptidase M13 domain. Residue H475 participates in Zn(2+) binding. E476 is a catalytic residue. Zn(2+) contacts are provided by H479 and E535. The Proton donor role is filled by D539.

Belongs to the peptidase M13 family. Monomer. Requires Zn(2+) as cofactor.

In terms of biological role, endopeptidase with broad substrate specificity for several oligopeptides. This chain is Neutral endopeptidase (pepO), found in Lactococcus lactis subsp. lactis (strain IL1403) (Streptococcus lactis).